The sequence spans 547 residues: MEYHPSSQSPQVNPGMESQQGGYTYTYQQPAPPNSLHLQHPSILTRLPPLSSSVVSPSLASLPPFTPTSTYHSIAALTPPSYPQSSSAPSNNSYTIVPSPHDPSNAYSMHHVLQNTAPQSVPSPSPIEMVPPSPPKTGSNNSAPVTGKTVQSGNALNNSGLVKRQARKRTKTGCLTCRKRRIKCDERKPICYNCIKSKRQCEGYTHFPRPSGTFTASRRIPVSSLLSEPAPHGLAGQPTHPTFLYYIQSVAPSLCLWDACHFPPLSPYSSFSSIYWSSTVPELALRNPNISVALYAFASAKRHLTDDAVAFARQARVALTNITTTDSLLILVLLAVTQLYIPKSDIQLFNFAVDQVVKFDASLMTSPSDEIITYLLRRMFIRQVVLAGIVKPLASGLNPLPLLKCDLPPATTPTAVLDESLFHLGLRKLCHEKGLEPEFTKWSKNCPIDKADLPRLALLMIHAVFTSPVSLAQWVELILQNPDPTPAIHIARACLLAVHGVVDLGDLQMKVEKCVQSCEERQLQATISNFSTEVAQTNSSALAIGCQ.

The segment covering 1–18 has biased composition (polar residues); it reads MEYHPSSQSPQVNPGMES. Disordered regions lie at residues 1-41 and 80-165; these read MEYH…LQHP and PSYP…VKRQ. 2 stretches are compositionally biased toward low complexity: residues 19 to 29 and 83 to 94; these read QQGGYTYTYQQ and PQSSSAPSNNSY. The span at 121-135 shows a compositional bias: pro residues; it reads VPSPSPIEMVPPSPP. Residues 136–160 are compositionally biased toward polar residues; sequence KTGSNNSAPVTGKTVQSGNALNNSG. Residues 174–201 constitute a DNA-binding region (zn(2)-C6 fungal-type); sequence CLTCRKRRIKCDERKPICYNCIKSKRQC.

It localises to the nucleus. This is an uncharacterized protein from Schizosaccharomyces pombe (strain 972 / ATCC 24843) (Fission yeast).